The following is a 331-amino-acid chain: D/L-glyceraldehyde reductase (331 aa).

The Proton donor role is filled by Tyr51. His114 contributes to the substrate binding site. Residue 213-276 participates in NADP(+) binding; it reads SAFGNNTKGL…SVTKARIAEN (64 aa).

It belongs to the aldo/keto reductase family.

It carries out the reaction glycerol + NADP(+) = L-glyceraldehyde + NADPH + H(+). The catalysed reaction is glycerol + NADP(+) = D-glyceraldehyde + NADPH + H(+). The protein operates within carbohydrate acid metabolism. Mediates the conversion of L-glyceraldehyde to glycerol in D-galacturonate catabolic process. Also able to reduce D-glyceraldehyde. The chain is D/L-glyceraldehyde reductase (gld1) from Hypocrea jecorina (Trichoderma reesei).